Consider the following 437-residue polypeptide: GTPase Obg (437 aa).

The Obg domain maps to 2–161 (SDFIDRALIT…RELQLELKVI (160 aa)). Residues 162 to 335 (ADVGLVGFPN…LQRRIVDILR (174 aa)) form the OBG-type G domain. GTP is bound by residues 168–175 (GFPNAGKS), 193–197 (FTTLS), 214–217 (DIPG), 284–287 (NKTD), and 316–318 (SAA). Residues serine 175 and threonine 195 each coordinate Mg(2+). Positions 355 to 433 (FSNIDPNDFW…IEKAELLWQD (79 aa)) constitute an OCT domain.

The protein belongs to the TRAFAC class OBG-HflX-like GTPase superfamily. OBG GTPase family. Monomer. Requires Mg(2+) as cofactor.

The protein resides in the cytoplasm. Its function is as follows. An essential GTPase which binds GTP, GDP and possibly (p)ppGpp with moderate affinity, with high nucleotide exchange rates and a fairly low GTP hydrolysis rate. Plays a role in control of the cell cycle, stress response, ribosome biogenesis and in those bacteria that undergo differentiation, in morphogenesis control. In Herpetosiphon aurantiacus (strain ATCC 23779 / DSM 785 / 114-95), this protein is GTPase Obg.